A 504-amino-acid chain; its full sequence is Glycerol kinase (504 aa).

Threonine 12 is a binding site for ADP. The ATP site is built by threonine 12, threonine 13, and serine 14. Threonine 12 provides a ligand contact to sn-glycerol 3-phosphate. Arginine 16 lines the ADP pocket. Arginine 82, glutamate 83, tyrosine 134, and aspartate 246 together coordinate sn-glycerol 3-phosphate. Glycerol-binding residues include arginine 82, glutamate 83, tyrosine 134, aspartate 246, and glutamine 247. ADP contacts are provided by threonine 268 and glycine 312. 4 residues coordinate ATP: threonine 268, glycine 312, glutamine 316, and glycine 413. Positions 413 and 417 each coordinate ADP.

This sequence belongs to the FGGY kinase family.

The catalysed reaction is glycerol + ATP = sn-glycerol 3-phosphate + ADP + H(+). It participates in polyol metabolism; glycerol degradation via glycerol kinase pathway; sn-glycerol 3-phosphate from glycerol: step 1/1. Its activity is regulated as follows. Inhibited by fructose 1,6-bisphosphate (FBP). Functionally, key enzyme in the regulation of glycerol uptake and metabolism. Catalyzes the phosphorylation of glycerol to yield sn-glycerol 3-phosphate. This Renibacterium salmoninarum (strain ATCC 33209 / DSM 20767 / JCM 11484 / NBRC 15589 / NCIMB 2235) protein is Glycerol kinase.